The sequence spans 1222 residues: Protein SCP160 (1222 aa).

A compositionally biased stretch (polar residues) spans 1-12 (MSEEQTAIDSPP). The interval 1 to 59 (MSEEQTAIDSPPSTVEGSVETVTTIDSPSTTASTIAATAEEHPQLEKKPTPLPSLKDLP) is disordered. Over residues 13–38 (STVEGSVETVTTIDSPSTTASTIAAT) the composition is skewed to low complexity. The span at 39-49 (AEEHPQLEKKP) shows a compositional bias: basic and acidic residues. T50 bears the Phosphothreonine mark. Residues S54, S63, S85, S87, and S89 each carry the phosphoserine modification. The tract at residues 79–98 (KPAVSNSPSPSPSAPSLTTG) is disordered. In terms of domain architecture, KH 1 spans 177–249 (PINAVIEVPS…ESVNLAKAKI (73 aa)). Position 630 is a phosphoserine (S630). KH domains lie at 634–702 (KSKM…KKYL), 712–771 (IITK…HEEL), 782–851 (GHKM…AKRV), 861–929 (FVTE…VEEI), and 939–1001 (SVTK…EKKI). S1112 carries the post-translational modification Phosphoserine. Positions 1153-1216 (YAGYVWGADT…AGVEKAGEMV (64 aa)) constitute a KH 7 domain.

The protein localises to the endoplasmic reticulum membrane. The protein resides in the nucleus membrane. Involved in the control of mitotic chromosome transmission. Required during cell division for faithful partitioning of the ER-nuclear envelope membranes which, in S.cerevisiae, enclose the duplicated chromosomes. This chain is Protein SCP160 (SCP160), found in Saccharomyces cerevisiae (strain ATCC 204508 / S288c) (Baker's yeast).